We begin with the raw amino-acid sequence, 308 residues long: Membrane protein insertase YidC 1 (308 aa).

The signal sequence occupies residues 1–22 (MKSIKRFALSAMGVAMLLVLTG). C23 carries N-palmitoyl cysteine lipidation. C23 carries S-diacylglycerol cysteine lipidation. The next 5 membrane-spanning stretches (helical) occupy residues 60-80 (FGVA…PLGI), 135-155 (FGGV…AIYF), 168-188 (YLGI…GVLY), 211-226 (MIYM…SLFS), and 232-252 (LYWV…NYIV). Positions 263–308 (ELAKNPPKASAFSKPSGRKDVTPEQPTAITSKKKHKNRNAGKQRSR) are disordered. Over residues 293–308 (SKKKHKNRNAGKQRSR) the composition is skewed to basic residues.

Belongs to the OXA1/ALB3/YidC family. Type 2 subfamily.

The protein resides in the cell membrane. Required for the insertion and/or proper folding and/or complex formation of integral membrane proteins into the membrane. Involved in integration of membrane proteins that insert both dependently and independently of the Sec translocase complex, as well as at least some lipoproteins. The sequence is that of Membrane protein insertase YidC 1 from Streptococcus pneumoniae serotype 4 (strain ATCC BAA-334 / TIGR4).